The sequence spans 121 residues: MAELHVEIVAVERELWSGDATFVFTRTTAGEIGILPRHIPLVAQLVDDAMVRVEREGEDDLRIAVDGGFLSVTEEAVRILVENAELESEIDADAAKQDSESDDERTAAWGRARLRALGQLD.

It belongs to the ATPase epsilon chain family. F-type ATPases have 2 components, CF(1) - the catalytic core - and CF(0) - the membrane proton channel. CF(1) has five subunits: alpha(3), beta(3), gamma(1), delta(1), epsilon(1). CF(0) has three main subunits: a, b and c.

The protein localises to the cell membrane. In terms of biological role, produces ATP from ADP in the presence of a proton gradient across the membrane. In Mycolicibacterium vanbaalenii (strain DSM 7251 / JCM 13017 / BCRC 16820 / KCTC 9966 / NRRL B-24157 / PYR-1) (Mycobacterium vanbaalenii), this protein is ATP synthase epsilon chain.